Here is a 1269-residue protein sequence, read N- to C-terminus: Histone-lysine N-methyltransferase SETDB1 (1269 aa).

Residues 9–63 adopt a coiled-coil conformation; the sequence is KELGISMDDLRELIDRELEKIEFVKQRKAQLLEMEQLVKQKEAEVDHVDKLFDNA. Disordered regions lie at residues 85 to 121 and 153 to 188; these read YKES…GEAV and QKKS…DMSK. The span at 103-112 shows a compositional bias: acidic residues; that stretch reads EIPDEDDDDV. Low complexity predominate over residues 164–177; sequence SSHPSSPTSSVGGS. Tudor domains are found at residues 250 to 312 and 340 to 395; these read ENLT…RPWS and VLLK…MFSM. The segment covering 396-414 has biased composition (polar residues); that stretch reads KTSNASTQEKQQAGQQRTR. The segment at 396–516 is disordered; sequence KTSNASTQEK…FQSNQSVQPV (121 aa). Over residues 462–476 the composition is skewed to low complexity; it reads DSQQAQSKKQVAKKS. Over residues 486–497 the composition is skewed to polar residues; that stretch reads SGQSSPIPTESV. Residues 620-691 enclose the MBD domain; the sequence is HRGKNPLLVP…EMFCLDPYVL (72 aa). Residues 753-826 enclose the Pre-SET domain; it reads VGCDCTDGCR…MCNNRLVQHG (74 aa). C755, C757, C761, C767, C769, C807, C811, C813, and C818 together coordinate Zn(2+). Residues 829–1244 form the SET domain; it reads VRLQLFKTQN…AGTELTWDYN (416 aa). S-adenosyl-L-methionine is bound by residues 839-841, D877, and Y879; that span reads KGW. The segment at 894–1139 is disordered; sequence EGYESDAKSS…VAASAGPVKR (246 aa). The segment covering 919–932 has biased composition (acidic residues); it reads SGSEDQEESNDSSD. Composition is skewed to basic and acidic residues over residues 968-989 and 1021-1033; these read ASKD…ETSK and ETDK…EASK. A compositionally biased stretch (low complexity) spans 1078 to 1094; it reads TEEVLTLSSSSDSEVGS. Residues 1106-1120 are compositionally biased toward polar residues; sequence ATANDSDDIQTISSG. S-adenosyl-L-methionine-binding positions include R1198 and 1201–1202; that span reads NH. Residues C1204, C1257, C1259, and C1264 each coordinate Zn(2+). Residues 1253–1269 form the Post-SET domain; sequence KKLLCCCGSTECRGRLL.

It belongs to the class V-like SAM-binding methyltransferase superfamily. Histone-lysine methyltransferase family. Suvar3-9 subfamily.

The protein localises to the nucleus. It localises to the chromosome. It carries out the reaction N(6),N(6)-dimethyl-L-lysyl(9)-[histone H3] + S-adenosyl-L-methionine = N(6),N(6),N(6)-trimethyl-L-lysyl(9)-[histone H3] + S-adenosyl-L-homocysteine + H(+). Functionally, histone methyltransferase that specifically trimethylates 'Lys-9' of histone H3. H3 'Lys-9' trimethylation represents a specific tag for epigenetic transcriptional repression by recruiting HP1 (CBX1, CBX3 and/or CBX5) proteins to methylated histones. Mainly functions in euchromatin regions, thereby playing a central role in the silencing of euchromatic genes. H3 'Lys-9' trimethylation is coordinated with DNA methylation. Plays a role in promoter hypermethylation and transcriptional silencing of tumor suppressor genes (TSGs) or other tumor-related genes. Also required to maintain a transcriptionally repressive state of genes in undifferentiated embryonic stem cells (ESCs). Associates at promoter regions of tumor suppressor genes (TSGs) leading to their gene silencing. The polypeptide is Histone-lysine N-methyltransferase SETDB1 (setdb1) (Xenopus laevis (African clawed frog)).